A 437-amino-acid chain; its full sequence is Aromatic peroxidase fscJ (437 aa).

The first 19 residues, 1 to 19 (MKWLHLLSVVACVADEVYA), serve as a signal peptide directing secretion. Cys-83 is a heme binding site.

The protein belongs to the chloroperoxidase family. Requires heme b as cofactor.

It functions in the pathway secondary metabolite biosynthesis. Functionally, aromatic peroxidase; part of the fragmented gene cluster that mediates the biosynthesis of fusarochromene, a tryptophan-derived metabolite closely related to a group of mycotoxins including fusarochromanone. The role of fscJ within the pathway has not been identified yet. The first step of the pathway is the epimerization of L-tryptophan to D-tryptophan in the presence of the NRPS-like tryptophan epimerase fscC. D-tryptophan is subsequently hydroxylated by the tryptophan 6-hydroxylase fscE to yield 6-hydroxytryptophan. The pyrrole ring undergoes cleavaged by the tryptophan 2,3-dioxygenase fscD and is finally converted to 4-hydroxykyrunenine by the hydrolase fscH. The NRPS-like oxidoreductase fscA reduces the carboxyl group to primary alcohol and the DMATS-type prenyltransferase fscG performs prenylation, followed by the formation of a chromene ring catalyzed by the oxidoreductase fscI, which leads to desacetylfusarochromene. Epoxidation by fscF and rearrangement reactions of chromene double bonds convert compound desacetylfusarochromene to fusarochromanones. Although specific acetyltransferases were not found near the fsc gene cluster, several predicted enzymes containing the N-acetyltransferase superfamily domain are present in the genome of F.equiseti. These predicted enzymes may have the potential to convert desacetylfusarochromene to fusarochromene. This chain is Aromatic peroxidase fscJ, found in Fusarium equiseti (Fusarium scirpi).